The chain runs to 79 residues: MSFEVFEKLEVKVQQAIDTITLLQMEIEELKEKNNTLSQEVQEAAGGREALVRENEQLKQEQHVWQDRLRALLGKMEEV.

Positions 6–78 (FEKLEVKVQQ…LRALLGKMEE (73 aa)) form a coiled coil.

Belongs to the ZapB family. As to quaternary structure, homodimer. The ends of the coiled-coil dimer bind to each other, forming polymers. Interacts with FtsZ.

The protein resides in the cytoplasm. Functionally, non-essential, abundant cell division factor that is required for proper Z-ring formation. It is recruited early to the divisome by direct interaction with FtsZ, stimulating Z-ring assembly and thereby promoting cell division earlier in the cell cycle. Its recruitment to the Z-ring requires functional FtsA or ZipA. This is Cell division protein ZapB from Yersinia enterocolitica serotype O:8 / biotype 1B (strain NCTC 13174 / 8081).